Here is a 346-residue protein sequence, read N- to C-terminus: UDP-3-O-acylglucosamine N-acyltransferase (346 aa).

H253 acts as the Proton acceptor in catalysis.

The protein belongs to the transferase hexapeptide repeat family. LpxD subfamily. As to quaternary structure, homotrimer.

The enzyme catalyses a UDP-3-O-[(3R)-3-hydroxyacyl]-alpha-D-glucosamine + a (3R)-hydroxyacyl-[ACP] = a UDP-2-N,3-O-bis[(3R)-3-hydroxyacyl]-alpha-D-glucosamine + holo-[ACP] + H(+). It functions in the pathway bacterial outer membrane biogenesis; LPS lipid A biosynthesis. In terms of biological role, catalyzes the N-acylation of UDP-3-O-acylglucosamine using 3-hydroxyacyl-ACP as the acyl donor. Is involved in the biosynthesis of lipid A, a phosphorylated glycolipid that anchors the lipopolysaccharide to the outer membrane of the cell. The chain is UDP-3-O-acylglucosamine N-acyltransferase from Rickettsia typhi (strain ATCC VR-144 / Wilmington).